The sequence spans 858 residues: MTGRARARSRGRGRGQEPAAPGAQPPVSQEAAKPVVSTPSEGQLVGRGRQKPAPGAMSEEAMLQISAGFQQVKIGERGGRRRDFHDSGVHTRQLMEHVKESKTGVSGTAIELRANFMRLLSRPMWALYQYHVDYKPPMESRRLRSALLFQHEETLGKAHTFDGAILFLPNKLRNAETVLCSETRNGEKVEITVTLTNELPPSSPVCLQFYNILFRRILRILNMQQIGRHYYNPDDPFNIPQHRLTIWPGFMTTILQYESSIMLCSDVSHKVLRSETVLDFMYSLRQQCGDQRFPEACTKELVGLIILTKYNNKTYRIDDIAWDHTPNNTFKKGDTEISFKNYFKSQYGLDITDGNQVLLVSHVKRLGPSGRPPPGPAMLVPEFCYLTGLTDKMRADFNIMKDLASHTRLSPEQREGRINRLISNINRNGDVQNELTTWGLSFENKLLSLNGRVLPSERIIQGGRAFEYNPWTADWSKEMRGLPLISCMSLDNWLMFYTRRNADVAQSLLQTLNKVSGPMGIRMQRAVMIEYEDRQESLLRALQQNVARETQMVVVILPTNRKDKYDCVKKYLCVDCPTPSQCVVSRTISKPQALMTVATKIALQMNCKMGGELWSVEIPLRQLMIVGIDCYHDTAAGKRSIGAMVASLNQGMSRWFSKCVLQNRGQEIIDALKGSLQGALKAYLKYNNSLPSRIIVYRDGVGDGMLQSVVDYEVPQIMQSIKTMGQDYEPKLSVVVVKKRISSRFFARIDGKIANPPPGTVIDTEVTRPEWYDFFIVSQAVRFGCVAPTHYNVVFDNSGLKPDHMQRLTYKLCHMYYNWQGIVRVPAPCQYAHKLAFLVGQSIHKEPNMNLDDFLYYL.

Positions 1-13 (MTGRARARSRGRG) are enriched in basic residues. Residues 1–56 (MTGRARARSRGRGRGQEPAAPGAQPPVSQEAAKPVVSTPSEGQLVGRGRQKPAPGA) form a disordered region. The segment covering 16 to 26 (QEPAAPGAQPP) has biased composition (low complexity). Positions 276–388 (TVLDFMYSLR…LVPEFCYLTG (113 aa)) constitute a PAZ domain. A required for binding 2'-O-methylated 3'-end of piRNAs region spans residues 314–316 (TYR). An MID region region spans residues 476–612 (SKEMRGLPLI…LQMNCKMGGE (137 aa)). Residues 552–844 (MVVVILPTNR…LAFLVGQSIH (293 aa)) enclose the Piwi domain. Active-site residues include Asp-629, Glu-667, Asp-699, and His-833.

Belongs to the argonaute family. Piwi subfamily. Requires Mg(2+) as cofactor. Post-translationally, methylated on arginine residues; required for the interaction with Tudor domain-containing protein and subsequent localization to the meiotic nuage, also named P granule. In terms of tissue distribution, expressed exclusively in the adult gonads; expression in the ovary weaker than in the testis (at protein level). During neurogenesis and organogenesis, expression is detected in CNS (midbrain and eye) and fin buds. Starting from 24 hours post-fertilization, expression is found in the genital ridge.

The protein localises to the cytoplasm. Its function is as follows. Plays a central role during gametogenesis by repressing transposable elements and preventing their mobilization, which is essential for the germline integrity. Acts via the piRNA metabolic process, which mediates the repression of transposable elements during meiosis by forming complexes composed of piRNAs and Piwi proteins and governs the methylation and subsequent repression of transposons. Directly binds methylated piRNAs, a class of 24 to 30 nucleotide RNAs that are generated by a Dicer-independent mechanism and are primarily derived from transposons and other repeated sequence elements. Has a strong preference for piRNAs with a uridine nucleotide at their 5'-end (g1U preference, also named 1U-bias) and binds piRNAs in an opposite direction compared to piwil2/zili. Participates in a piRNA amplification loop with piwil2/zili. Not involved in the piRNA amplification loop, also named ping-pong amplification cycle. Acts as an endoribonuclease that cleaves transposon messenger RNAs. The sequence is that of Piwi-like protein 1 (piwil1) from Danio rerio (Zebrafish).